Consider the following 120-residue polypeptide: Small ribosomal subunit protein bS6 (120 aa).

This sequence belongs to the bacterial ribosomal protein bS6 family.

Functionally, binds together with bS18 to 16S ribosomal RNA. The protein is Small ribosomal subunit protein bS6 of Blochmanniella floridana.